Here is a 309-residue protein sequence, read N- to C-terminus: Ribosomal protein L11 methyltransferase (309 aa).

Positions 144, 165, 187, and 235 each coordinate S-adenosyl-L-methionine.

This sequence belongs to the methyltransferase superfamily. PrmA family.

It localises to the cytoplasm. It carries out the reaction L-lysyl-[protein] + 3 S-adenosyl-L-methionine = N(6),N(6),N(6)-trimethyl-L-lysyl-[protein] + 3 S-adenosyl-L-homocysteine + 3 H(+). Its function is as follows. Methylates ribosomal protein L11. The sequence is that of Ribosomal protein L11 methyltransferase from Prochlorococcus marinus (strain MIT 9215).